Consider the following 355-residue polypeptide: S-adenosylmethionine:tRNA ribosyltransferase-isomerase (355 aa).

Belongs to the QueA family. As to quaternary structure, monomer.

It is found in the cytoplasm. It carries out the reaction 7-aminomethyl-7-carbaguanosine(34) in tRNA + S-adenosyl-L-methionine = epoxyqueuosine(34) in tRNA + adenine + L-methionine + 2 H(+). Its pathway is tRNA modification; tRNA-queuosine biosynthesis. Its function is as follows. Transfers and isomerizes the ribose moiety from AdoMet to the 7-aminomethyl group of 7-deazaguanine (preQ1-tRNA) to give epoxyqueuosine (oQ-tRNA). The protein is S-adenosylmethionine:tRNA ribosyltransferase-isomerase of Pectobacterium atrosepticum (strain SCRI 1043 / ATCC BAA-672) (Erwinia carotovora subsp. atroseptica).